We begin with the raw amino-acid sequence, 603 residues long: DNA mismatch repair protein MutL (603 aa).

Residues 336–346 (EVSKKQKEQQK) show a composition bias toward basic and acidic residues. Disordered regions lie at residues 336-355 (EVSK…MSFE) and 361-384 (KETP…DTSR).

It belongs to the DNA mismatch repair MutL/HexB family.

In terms of biological role, this protein is involved in the repair of mismatches in DNA. It is required for dam-dependent methyl-directed DNA mismatch repair. May act as a 'molecular matchmaker', a protein that promotes the formation of a stable complex between two or more DNA-binding proteins in an ATP-dependent manner without itself being part of a final effector complex. The chain is DNA mismatch repair protein MutL from Listeria welshimeri serovar 6b (strain ATCC 35897 / DSM 20650 / CCUG 15529 / CIP 8149 / NCTC 11857 / SLCC 5334 / V8).